Here is a 160-residue protein sequence, read N- to C-terminus: Endoribonuclease YbeY (160 aa).

Zn(2+)-binding residues include H111, H115, and H121.

Belongs to the endoribonuclease YbeY family. It depends on Zn(2+) as a cofactor.

It localises to the cytoplasm. In terms of biological role, single strand-specific metallo-endoribonuclease involved in late-stage 70S ribosome quality control and in maturation of the 3' terminus of the 16S rRNA. The chain is Endoribonuclease YbeY from Stutzerimonas stutzeri (strain A1501) (Pseudomonas stutzeri).